A 115-amino-acid polypeptide reads, in one-letter code: Large ribosomal subunit protein uL18 (115 aa).

It belongs to the universal ribosomal protein uL18 family. In terms of assembly, part of the 50S ribosomal subunit; part of the 5S rRNA/L5/L18/L25 subcomplex. Contacts the 5S and 23S rRNAs.

In terms of biological role, this is one of the proteins that bind and probably mediate the attachment of the 5S RNA into the large ribosomal subunit, where it forms part of the central protuberance. The sequence is that of Large ribosomal subunit protein uL18 from Mycoplasma genitalium (strain ATCC 33530 / DSM 19775 / NCTC 10195 / G37) (Mycoplasmoides genitalium).